The chain runs to 785 residues: Hypha-specific G1 cyclin-related protein 1 (785 aa).

The segment at 1–42 is disordered; the sequence is MINITKPLTPKSISQQKQQQQHPYKNISTTKSNNNPQASGSK. The span at 22–42 shows a compositional bias: polar residues; the sequence is HPYKNISTTKSNNNPQASGSK. One can recognise a Cyclin N-terminal domain in the interval 71-238; that stretch reads DIYDIMVNLI…VLNTLEWSLN (168 aa). Disordered regions lie at residues 408–433, 447–679, and 750–774; these read TTTT…TTPV, VSST…SKFN, and NNSG…DSPI. Composition is skewed to low complexity over residues 447 to 473 and 484 to 512; these read VSST…STTP and NYSN…NNTT. Over residues 513–535 the composition is skewed to polar residues; it reads ISPVDSTTINSHTKNSSQLNYQY. Over residues 579–613 the composition is skewed to low complexity; the sequence is NSANKNSNKSNSANNNNTTTIATTTTTTTNNNNNS. A compositionally biased stretch (polar residues) spans 621 to 631; it reads LSYNNYFNSPN. The span at 646–679 shows a compositional bias: low complexity; that stretch reads QQQQQNQGQNQQQPLQLYQGDNNNNGTNTNSKFN. A compositionally biased stretch (gly residues) spans 754 to 764; sequence NGKGNGNGGSG. Positions 765 to 774 are enriched in polar residues; the sequence is TPISENDSPI.

The protein belongs to the cyclin family. As to quaternary structure, interacts with CDC28.

Functionally, hypha-specific G1 cyclin-related protein involved in regulation of morphogenesis and opaque cells filamentous growth, and required for both conventional and pheromone-stimulated biofilm formation. Required to maintain hyphal tip localization of actin and SPA2. Regulates the CDC28 kinase during hyphal growth. The CDC28-HGC1 complex phosphorylates and prevents RGA2 from localizing to hyphal tips, leading to localized CDC42 activation for hyphal extension. The CDC28-HGC1 complex also phosphorylates SEC2 and maintains CDC11 phosphorylation throughout hyphal growth. Moreover CDC28-HGC1 phosphorylation of EFG1 represses cell separation genes during hyphal growth. Also partially controls SEP7 phosphorylation status and subsequent septin ring dynamics. Required for virulence and especially mediates dynamic adhesion to endothelium of blood vessels during circulation. The chain is Hypha-specific G1 cyclin-related protein 1 (HGC1) from Candida albicans (strain SC5314 / ATCC MYA-2876) (Yeast).